A 601-amino-acid polypeptide reads, in one-letter code: HMG domain-containing protein 4 (601 aa).

Lys-8 is covalently cross-linked (Glycyl lysine isopeptide (Lys-Gly) (interchain with G-Cter in SUMO2)). Disordered stretches follow at residues 51 to 410 (VRNS…KKKN) and 473 to 514 (TTVK…ASPA). The segment covering 82–93 (DYYYGDISSLES) has biased composition (low complexity). At Ser-102 the chain carries Phosphoserine. Lys-191 participates in a covalent cross-link: Glycyl lysine isopeptide (Lys-Gly) (interchain with G-Cter in SUMO2). Position 197 is a phosphoserine (Ser-197). Composition is skewed to polar residues over residues 212–221 (QYPSQQATVK) and 270–282 (DASQ…SANL). A compositionally biased stretch (basic residues) spans 316 to 344 (IKKKKKSKKSKKKKDKEKHKEKRHSKSKR). Residues 394-404 (EEKDKERERGE) show a composition bias toward basic and acidic residues. A DNA-binding region (HMG box) is located at residues 407–475 (KKKNMSAYQV…KQNKAEATTV (69 aa)). A phosphoserine mark is found at Ser-497, Ser-502, and Ser-512.

It localises to the nucleus. Functionally, negatively regulates Wnt/beta-catenin signaling during development. The protein is HMG domain-containing protein 4 (HMGXB4) of Homo sapiens (Human).